The primary structure comprises 736 residues: MNSCNNIAITPELIAQHGLKSDEYQHILTLIGREPTFTELGIFSAMWNEHCSYKSSKKWLKTLPIKGKCVIQGPGENAGVIDIGKGQCVVFKMESHNHPSYIEPYQGAATGMGGILRDVFTMGARPVAAMNALRFGSPNHPRTRHLVAGVVSGIGGYSNAFGVPTVGGEVNFDERYNGNILVNAFVAGIAKTDSIFYSKAQGVGLPVVYLGAKTGRDGVGGAMMASAEFNDSIDEKRPTVQVGDPFIEKCLLEACLELMELKAIVAIQDMGAAGLTSSAVEMGAKGNLGIQLNLDKVPTREENMTAYEIMLSESQERMLMVLKPELKKRAAAIFQKWGLHFSIIGKTTDDLRFRVTHQGEEVVNLPIKELGDEAPVYDRPWIEPTLKPTLKAEEVKKIENFADVLLKLLNSANQSSRRWVYEQYDTLIQGNTLVRPGGDAGVIRVSNNDKRALAFSCDVTPRYCEADPYEGGKQAVVECWRNISTTGATPLAATDNLNFGNPENPKIMGQLVFAIKGISEACRVLDFPIVSGNVSLYNETNGEAILPTPTIAGVGLLDNWSKTVTIGGMQNKDSIVLIGPCGSHLGQSIYARNILNIDAGAPPHIDLQLEKKHGQFVRDVIHRGFVNAAHDISDGGLALALAEMVIKASKGIRIKLSNKSPQHAELFGEDQARYILAVKPHALNSLKELAQVNEISLTELGTVEGNSLNIDSILNLSIDKLTQNYESWFPQFMNEE.

Residue H50 is part of the active site. ATP is bound by residues Y53 and K92. E94 is a Mg(2+) binding site. Substrate contacts are provided by residues S95 to H98 and R117. H96 acts as the Proton acceptor in catalysis. D118 is a binding site for Mg(2+). Q241 serves as a coordination point for substrate. D269 provides a ligand contact to Mg(2+). E313 to Q315 serves as a coordination point for substrate. 2 residues coordinate ATP: D495 and G532. Residue N533 participates in Mg(2+) binding. Substrate is bound at residue S535.

The protein belongs to the FGAMS family. In terms of assembly, monomer. Part of the FGAM synthase complex composed of 1 PurL, 1 PurQ and 2 PurS subunits.

It is found in the cytoplasm. The catalysed reaction is N(2)-formyl-N(1)-(5-phospho-beta-D-ribosyl)glycinamide + L-glutamine + ATP + H2O = 2-formamido-N(1)-(5-O-phospho-beta-D-ribosyl)acetamidine + L-glutamate + ADP + phosphate + H(+). Its pathway is purine metabolism; IMP biosynthesis via de novo pathway; 5-amino-1-(5-phospho-D-ribosyl)imidazole from N(2)-formyl-N(1)-(5-phospho-D-ribosyl)glycinamide: step 1/2. In terms of biological role, part of the phosphoribosylformylglycinamidine synthase complex involved in the purines biosynthetic pathway. Catalyzes the ATP-dependent conversion of formylglycinamide ribonucleotide (FGAR) and glutamine to yield formylglycinamidine ribonucleotide (FGAM) and glutamate. The FGAM synthase complex is composed of three subunits. PurQ produces an ammonia molecule by converting glutamine to glutamate. PurL transfers the ammonia molecule to FGAR to form FGAM in an ATP-dependent manner. PurS interacts with PurQ and PurL and is thought to assist in the transfer of the ammonia molecule from PurQ to PurL. In Bartonella quintana (strain Toulouse) (Rochalimaea quintana), this protein is Phosphoribosylformylglycinamidine synthase subunit PurL.